Here is a 64-residue protein sequence, read N- to C-terminus: MVTVKFKYKGEEKEVDISKIKKVWRVGKMISFTYDDNGKTGRGAVSEKDAPKELLQMLEKSGKK.

N6-methyllysine occurs at positions 5 and 7.

The protein belongs to the 7 kDa DNA-binding/endoribonuclease P2 family. Monomer.

The protein localises to the cytoplasm. Its function is as follows. Can constrain negative DNA supercoils. May be involved in maintaining the integrity of the genome at high temperature. The sequence is that of DNA-binding protein 7 from Sulfurisphaera tokodaii (strain DSM 16993 / JCM 10545 / NBRC 100140 / 7) (Sulfolobus tokodaii).